We begin with the raw amino-acid sequence, 1031 residues long: Formin-binding protein 4 (1031 aa).

Disordered stretches follow at residues 1-102, 116-143, and 166-205; these read MMGK…TTRP, AYAD…NQAT, and APVV…QTPG. Ser19 carries the post-translational modification Phosphoserine. Low complexity-rich tracts occupy residues 41 to 73 and 83 to 92; these read DSTA…APED and VVEVPNVVQN. Residues Ser120, Ser125, and Ser128 each carry the phosphoserine modification. Residues 134-143 are compositionally biased toward polar residues; it reads SKEANGNQAT. Residue Thr176 is modified to Phosphothreonine. Over residues 190 to 203 the composition is skewed to polar residues; sequence LSPTASNGSDTAQT. The WW 1 domain occupies 218–252; that stretch reads EIEMGDWQEVWDENTGCYYYWNTQTNEVTWELPQY. Residue Lys294 is modified to N6-acetyllysine. Residue Lys305 forms a Glycyl lysine isopeptide (Lys-Gly) (interchain with G-Cter in SUMO1) linkage. Lys339 is covalently cross-linked (Glycyl lysine isopeptide (Lys-Gly) (interchain with G-Cter in SUMO2)). Lys352 participates in a covalent cross-link: Glycyl lysine isopeptide (Lys-Gly) (interchain with G-Cter in SUMO1); alternate. Residue Lys352 forms a Glycyl lysine isopeptide (Lys-Gly) (interchain with G-Cter in SUMO2); alternate linkage. Positions 355–518 are disordered; that stretch reads DPVSETKETS…KETEVEESSE (164 aa). A compositionally biased stretch (acidic residues) spans 400–414; sequence ESEEEEEEEEQDTLE. Residues 418–430 show a composition bias toward basic and acidic residues; the sequence is ALERKKAELRALE. Ser435, Ser440, Ser443, Ser446, and Ser450 each carry phosphoserine. A compositionally biased stretch (polar residues) spans 436–450; sequence VSGSSPRSDISQPAS. Positions 457–466 are enriched in basic residues; that stretch reads IMSKRGKWKM. Over residues 469-482 the composition is skewed to low complexity; sequence RATSPESTSRSSSK. Ser472, Ser507, and Ser516 each carry phosphoserine. The segment covering 499-518 has biased composition (basic and acidic residues); sequence DSEKIDEISDKETEVEESSE. A Glycyl lysine isopeptide (Lys-Gly) (interchain with G-Cter in SUMO1); alternate cross-link involves residue Lys527. Residue Lys527 forms a Glycyl lysine isopeptide (Lys-Gly) (interchain with G-Cter in SUMO2); alternate linkage. Residues 603–637 form the WW 2 domain; it reads NATPKGWSCHWDRDHRRYFYVNEQSGESQWEFPDG. Disordered regions lie at residues 629–681, 712–813, and 900–994; these read ESQW…SLCK, PLPL…VQRS, and PAQA…RIEE. A compositionally biased stretch (basic and acidic residues) spans 643 to 663; sequence SQTKEVRDESLPKLTVKDKTC. The segment covering 664–677 has biased composition (polar residues); sequence TDPNSTESSENPTG. Over residues 712–741 the composition is skewed to pro residues; sequence PLPLEMPPPPPPPPESPPPPPPPPPPPPPL. Over residues 742 to 757 the composition is skewed to acidic residues; it reads EDGEIQEVEMEDEGSE. Residues 771–794 are compositionally biased toward polar residues; the sequence is KPSTQTTAVTSQSLVDSTASSPPS. Residues 913 to 939 show a composition bias toward pro residues; sequence VEPPPPPPPPPTPTPPPPPPAPKVPPP. Residues 943-955 are compositionally biased toward basic residues; the sequence is RKGKKDKAKKSKT. Positions 971-984 are enriched in acidic residues; sequence LDEEDNSSSSEEDR. 3 positions are modified to phosphoserine: Ser977, Ser978, and Ser979. Positions 985–994 are enriched in basic and acidic residues; that stretch reads ESTAQKRIEE.

In terms of assembly, binds FMN1. Interacts with the Arg/Gly-rich-flanked Pro-rich regions of KHDRBS1/SAM68. Arginine methylation in these regions has no effect on this binding. In terms of tissue distribution, ubiquitous. Highest levels in spleen and thymus.

This Mus musculus (Mouse) protein is Formin-binding protein 4 (Fnbp4).